A 791-amino-acid polypeptide reads, in one-letter code: Centrosomal protein of 89 kDa (791 aa).

Residues 27–203 (APKPAVPRTP…HTQQKDVKHS (177 aa)) form a disordered region. A compositionally biased stretch (pro residues) spans 30–45 (PAVPRTPPPRSPNPSP). A Phosphoserine modification is found at S50. A compositionally biased stretch (low complexity) spans 50–62 (SALAAAILATTLT). Over residues 75-89 (SRSESDASDIEKDSF) the composition is skewed to basic and acidic residues. Residues 94–107 (ATTSELRLRQSWQN) show a composition bias toward polar residues. A compositionally biased stretch (basic and acidic residues) spans 137–161 (RESESTWKDVGDGRDATYTVPHRDQ). Over residues 181 to 190 (SDSSSSSSSS) the composition is skewed to low complexity. 3 coiled-coil regions span residues 252–291 (SANQALSCELSALRQAMKDLQLKLKLVEKDNRKLKETEKA), 370–598 (LLAY…MGKE), and 670–737 (HRLK…SLLQ).

Its subcellular location is the cytoplasm. The protein localises to the cytosol. It localises to the cytoskeleton. The protein resides in the microtubule organizing center. It is found in the centrosome. Its subcellular location is the spindle pole. The protein localises to the centriole. It localises to the mitochondrion intermembrane space. Its function is as follows. Required for ciliogenesis. Also plays a role in mitochondrial metabolism where it may modulate complex IV activity. This is Centrosomal protein of 89 kDa (Cep89) from Mus musculus (Mouse).